Consider the following 1852-residue polypeptide: Dihydropyridine-sensitive L-type skeletal muscle calcium channel subunit alpha-1 (1852 aa).

At 1 to 70 the chain is on the cytoplasmic side; sequence MESGSGGGGG…KTCINIVEWK (70 aa). The I repeat unit spans residues 57–354; it reads NPFRKTCINI…LVLGALSGEF (298 aa). Residues 71-86 traverse the membrane as a helical segment; the sequence is PFEIIILLTIFANCVA. At 87–107 the chain is on the extracellular side; that stretch reads LAVFLPMPEEDTNNTNLTLES. N-linked (GlcNAc...) asparagine glycans are attached at residues N99 and N102. Residues 108–127 traverse the membrane as a helical segment; it reads LEYIFLVIFTLECFLKIVAY. At 128-139 the chain is on the cytoplasmic side; it reads GLLFHEGAYLRN. The chain crosses the membrane as a helical span at residues 140–155; the sequence is CWNILDFVIVFMGLFT. Residues 156–176 are Extracellular-facing; sequence LVVDTINTIAGVPTEKGGGFD. Residues 177–195 form a helical membrane-spanning segment; that stretch reads MKALRAFRVLRPLRLVSGV. Residues 196–214 lie on the Cytoplasmic side of the membrane; the sequence is PSLQVVMSSILKSMLPLFH. A helical membrane pass occupies residues 215-234; the sequence is IALLVFFMVHIYAIMGLELF. At 235 to 326 the chain is on the extracellular side; the sequence is KCKMHKTCYY…WINDAMGNDW (92 aa). N274 carries N-linked (GlcNAc...) asparagine glycosylation. Residues 327-351 traverse the membrane as a helical segment; it reads PWIYFLTLILVGSFFILNLVLGALS. Residues 352–447 lie on the Cytoplasmic side of the membrane; the sequence is GEFTKEREES…RKCHVWVKSK (96 aa). Residues 374 to 391 form a binding to the beta subunit region; it reads QQMDEDLEGYMEWITHAE. The stretch at 433–679 is one II repeat; the sequence is NVVLRRKCHV…VFLAIAVDNL (247 aa). The helical transmembrane segment at 448–466 threads the bilayer; sequence FFNWWVLLVVLLNTLVIAM. The Extracellular portion of the chain corresponds to 467 to 481; it reads EHHNQTEGLTSFQDT. N-linked (GlcNAc...) asparagine glycosylation occurs at N470. A helical transmembrane segment spans residues 482–501; sequence ANVILLACFTIEMVMKMYAF. Residues 502-509 are Cytoplasmic-facing; the sequence is GPRAYFMS. The helical transmembrane segment at 510–528 threads the bilayer; the sequence is IFNRFDCFVVTIGILEIIL. At 529-538 the chain is on the extracellular side; it reads VVSNIMTPLG. Residues 539 to 557 form a helical membrane-spanning segment; it reads ISVMRCIRLLRLFKLTRYW. At 558-576 the chain is on the cytoplasmic side; it reads TSLNNLVASLLNSVKSIAS. A helical transmembrane segment spans residues 577-596; it reads LLLLLFLFIVIFALLGMQVF. Topologically, residues 597-651 are extracellular; sequence GGKFNFPDRVIQRSNFDNFPQALISVFQVLTGEEWDSIMYNGIMAHGGPQSPGIL. Residues 652–675 form a helical membrane-spanning segment; that stretch reads VSIYFIILYVCGNFVLLNVFLAIA. The Cytoplasmic portion of the chain corresponds to 676–815; sequence VDNLAEAESL…KLCHRIVNHT (140 aa). An III repeat occupies 802 to 1084; that stretch reads HKFRKLCHRI…IFVGFVIVTF (283 aa). A helical transmembrane segment spans residues 816–834; it reads TFTNIILLFILLSSISLAA. The Extracellular segment spans residues 835–850; it reads EDPIDPRSFRNKVLAY. A helical membrane pass occupies residues 851–870; it reads ADIVFTTVFTIEIVLKMTVY. Topologically, residues 871 to 882 are cytoplasmic; sequence GAFLHTGSFCRN. The helical transmembrane segment at 883–901 threads the bilayer; that stretch reads SFNILDLIVVGVSLLSMGM. Topologically, residues 902–908 are extracellular; it reads ESSTISV. Residues 909–927 traverse the membrane as a helical segment; that stretch reads VKILRVLRVLRPLRAINRA. The Cytoplasmic segment spans residues 928-946; sequence KGLKHVVQCMFVAIKTIGN. Residues 947–966 traverse the membrane as a helical segment; sequence IVLVTMLLDFMFACIGVQLF. Topologically, residues 967–1056 are extracellular; it reads KGKLYYCTDP…TGPLYNNRVG (90 aa). The interval 1004–1093 is dihydropyridine binding; that stretch reads RMWVNSDFNF…FQKQGEQEYK (90 aa). A helical membrane pass occupies residues 1057 to 1081; it reads ISIFFIIYIIIIAFFMMNIFVGFVI. Residues 1082–1134 lie on the Cytoplasmic side of the membrane; sequence VTFQKQGEQEYKDCELDKNQRQCVQYALKARPLKCYIPKNPHQYRVWYFVTSC. The IV repeat unit spans residues 1121 to 1405; the sequence is NPHQYRVWYF…LFVAIIMDNV (285 aa). A helical membrane pass occupies residues 1135–1153; that stretch reads YFEYLMFFLIMLNTLCLGI. The Extracellular portion of the chain corresponds to 1154–1168; it reads QHCNQSDHITKLSDT. N1157 is a glycosylation site (N-linked (GlcNAc...) asparagine). Residues 1169-1188 form a helical membrane-spanning segment; it reads LNLIFTVLFTGEMIVKLIAF. Residues 1189–1196 are Cytoplasmic-facing; sequence KAKGYFGD. Residues 1197-1215 form a helical membrane-spanning segment; the sequence is PWNVFDFIIVVGSIVDVVL. At 1216–1252 the chain is on the extracellular side; that stretch reads SEVDAALEARGGLWCLHGCAEVNPMQAIAEAENVRVS. Residues 1253–1271 traverse the membrane as a helical segment; sequence ITFFRLFRVLRLIKLLNRS. The Cytoplasmic portion of the chain corresponds to 1272-1290; that stretch reads EGIRNLLWTFIKSFQALPH. Residues 1291-1310 traverse the membrane as a helical segment; sequence VGLLIVMLFFIYAVIGMQMF. The Extracellular segment spans residues 1311 to 1377; it reads GKVALVDGTE…GEEYTCGSSI (67 aa). The segment at 1358–1424 is dihydropyridine binding; sequence LCDAKSDYGP…LGPHHLDEFK (67 aa). The phenylalkylamine binding stretch occupies residues 1370–1413; the sequence is EYTCGSSIAVFYFLSFYILCAFLIINLFVAIIMDNVDYLTRDWS. The chain crosses the membrane as a helical span at residues 1378 to 1402; it reads AVFYFLSFYILCAFLIINLFVAIIM. At 1403–1852 the chain is on the cytoplasmic side; that stretch reads DNVDYLTRDW…TKPKENTSAV (450 aa). An EF-hand domain is found at 1418–1453; the sequence is HHLDEFKKIWAEYDPEATGRIKHLDVVTLLRRIQPP. Positions 1431, 1433, 1435, 1437, and 1442 each coordinate Ca(2+). The tract at residues 1820-1852 is disordered; the sequence is NRQSGKVTKRKRRPIPVPPGTKSTKPKENTSAV.

It belongs to the calcium channel alpha-1 subunit (TC 1.A.1.11) family. Multisubunit complex consisting of alpha-1, alpha-2, beta and delta subunits in a 1:1:1:1 ratio. The channel activity is directed by the pore-forming and voltage-sensitive alpha-1 subunit. In many cases, this subunit is sufficient to generate voltage-sensitive calcium channel activity. The auxiliary subunits beta and alpha-2/delta linked by a disulfide bridge regulate the channel activity. An additional gamma subunit is present only in skeletal muscle L-type channel. Post-translationally, may be non-phosphorylated. Skeletal muscle.

It is found in the membrane. Functionally, voltage-sensitive calcium channels (VSCC) mediate the entry of calcium ions into excitable cells and are also involved in a variety of calcium-dependent processes, including muscle contraction, gene expression, cell motility, cell division and cell death. The isoform alpha-1S gives rise to L-type calcium currents. Long-lasting (L-type) calcium channels belong to the 'high-voltage activated' (HVA) group. They are blocked by dihydropyridines (DHP), phenylalkylamines, and by benzothiazepines. Calcium channels containing the alpha-1S subunit play an important role in excitation-contraction coupling in skeletal muscle. The protein is Dihydropyridine-sensitive L-type skeletal muscle calcium channel subunit alpha-1 of Cyprinus carpio (Common carp).